We begin with the raw amino-acid sequence, 407 residues long: Melanoma-associated antigen B6 (407 aa).

The interval 1 to 175 (MPRGHKSKLR…YDVAAEGEDE (175 aa)) is disordered. Composition is skewed to polar residues over residues 18–29 (TNGQPQGLTGPQ), 57–71 (DASI…SPTG), 94–113 (PSTS…SPTG), and 136–155 (PSTS…SPTG). The 200-residue stretch at 195-394 (VKKKACTLAQ…GLYPHLYEDA (200 aa)) folds into the MAGE domain.

In terms of tissue distribution, expressed in testis. Not expressed in other normal tissues, but is expressed in tumors of different histological origins.

In Homo sapiens (Human), this protein is Melanoma-associated antigen B6 (MAGEB6).